The chain runs to 282 residues: HTH-type transcriptional activator RhaR (282 aa).

In terms of domain architecture, HTH araC/xylS-type spans 179–277; sequence DKLITRLAAS…GMTPSQWRHL (99 aa). 2 consecutive DNA-binding regions (H-T-H motif) follow at residues 196 to 217 and 244 to 267; these read DKFCDEASCSERVLRQQFRQQT and ISDISTECGFEDSNYFSVVFTRET.

In terms of assembly, binds DNA as a dimer.

It localises to the cytoplasm. Functionally, activates expression of the rhaSR operon in response to L-rhamnose. The sequence is that of HTH-type transcriptional activator RhaR from Escherichia coli O1:K1 / APEC.